A 57-amino-acid chain; its full sequence is Large ribosomal subunit protein bL32 (57 aa).

This sequence belongs to the bacterial ribosomal protein bL32 family.

This chain is Large ribosomal subunit protein bL32, found in Staphylococcus aureus (strain MSSA476).